Reading from the N-terminus, the 439-residue chain is D-erythronate kinase (439 aa).

Residues Ser-253, 366 to 369, and Gly-412 contribute to the ATP site; that span reads GGDV.

It belongs to the four-carbon acid sugar kinase family.

The enzyme catalyses D-erythronate + ATP = 4-phospho-D-erythronate + ADP + H(+). Catalyzes the ATP-dependent phosphorylation of D-erythronate to D-erythronate 4-phosphate. Can also phosphorylate D-threonate and 4-hydroxy-L-threonine, with lower efficiency. The polypeptide is D-erythronate kinase (Heliobacterium modesticaldum (strain ATCC 51547 / Ice1)).